Reading from the N-terminus, the 237-residue chain is Adenosine 5'-phosphosulfate reductase (237 aa).

Positions 123, 124, 206, and 209 each coordinate [4Fe-4S] cluster. Cysteine 232 functions as the Nucleophile; cysteine thiosulfonate intermediate in the catalytic mechanism.

The protein belongs to the PAPS reductase family. CysH subfamily. It depends on [4Fe-4S] cluster as a cofactor.

The protein resides in the cytoplasm. The catalysed reaction is [thioredoxin]-disulfide + sulfite + AMP + 2 H(+) = adenosine 5'-phosphosulfate + [thioredoxin]-dithiol. The protein operates within sulfur metabolism; hydrogen sulfide biosynthesis; sulfite from sulfate. Catalyzes the formation of sulfite from adenosine 5'-phosphosulfate (APS) using thioredoxin as an electron donor. The protein is Adenosine 5'-phosphosulfate reductase of Mycobacteroides abscessus (strain ATCC 19977 / DSM 44196 / CCUG 20993 / CIP 104536 / JCM 13569 / NCTC 13031 / TMC 1543 / L948) (Mycobacterium abscessus).